Reading from the N-terminus, the 226-residue chain is Phosphoheptose isomerase (226 aa).

Residues 50–212 form the SIS domain; it reads IAGVFETGGK…ERMMGYGTEC (163 aa). 65–67 is a binding site for substrate; sequence NGG. The Zn(2+) site is built by histidine 74 and glutamate 78. Substrate contacts are provided by residues glutamate 78, 109–110, 135–137, serine 140, and glutamine 188; these read ND and STS. Zn(2+) contacts are provided by glutamine 188 and histidine 196.

The protein belongs to the SIS family. GmhA subfamily. The cofactor is Zn(2+).

It is found in the cytoplasm. It catalyses the reaction 2 D-sedoheptulose 7-phosphate = D-glycero-alpha-D-manno-heptose 7-phosphate + D-glycero-beta-D-manno-heptose 7-phosphate. It participates in carbohydrate biosynthesis; D-glycero-D-manno-heptose 7-phosphate biosynthesis; D-glycero-alpha-D-manno-heptose 7-phosphate and D-glycero-beta-D-manno-heptose 7-phosphate from sedoheptulose 7-phosphate: step 1/1. Functionally, catalyzes the isomerization of sedoheptulose 7-phosphate in D-glycero-D-manno-heptose 7-phosphate. The protein is Phosphoheptose isomerase of Chlorobium phaeobacteroides (strain DSM 266 / SMG 266 / 2430).